The following is a 181-amino-acid chain: ATP synthase subunit delta (181 aa).

Belongs to the ATPase delta chain family. In terms of assembly, F-type ATPases have 2 components, F(1) - the catalytic core - and F(0) - the membrane proton channel. F(1) has five subunits: alpha(3), beta(3), gamma(1), delta(1), epsilon(1). F(0) has three main subunits: a(1), b(2) and c(10-14). The alpha and beta chains form an alternating ring which encloses part of the gamma chain. F(1) is attached to F(0) by a central stalk formed by the gamma and epsilon chains, while a peripheral stalk is formed by the delta and b chains.

The protein localises to the cell inner membrane. In terms of biological role, f(1)F(0) ATP synthase produces ATP from ADP in the presence of a proton or sodium gradient. F-type ATPases consist of two structural domains, F(1) containing the extramembraneous catalytic core and F(0) containing the membrane proton channel, linked together by a central stalk and a peripheral stalk. During catalysis, ATP synthesis in the catalytic domain of F(1) is coupled via a rotary mechanism of the central stalk subunits to proton translocation. Functionally, this protein is part of the stalk that links CF(0) to CF(1). It either transmits conformational changes from CF(0) to CF(1) or is implicated in proton conduction. The chain is ATP synthase subunit delta from Chlorobaculum parvum (strain DSM 263 / NCIMB 8327) (Chlorobium vibrioforme subsp. thiosulfatophilum).